Here is a 642-residue protein sequence, read N- to C-terminus: Probable glutamate--tRNA ligase, cytoplasmic (642 aa).

L-glutamate is bound at residue 152 to 154 (RFP). Residues 157-166 (PNGRLHIGHA) carry the 'HIGH' region motif. His162 is a binding site for ATP. L-glutamate-binding positions include Asp188, 326–330 (YDFAC), and Arg344. ATP contacts are provided by residues Glu347 and 382–386 (VLSKR). Positions 382-386 (VLSKR) match the 'KMSKS' region motif.

Belongs to the class-I aminoacyl-tRNA synthetase family. Glutamate--tRNA ligase type 2 subfamily.

It is found in the cytoplasm. The enzyme catalyses tRNA(Glu) + L-glutamate + ATP = L-glutamyl-tRNA(Glu) + AMP + diphosphate. This chain is Probable glutamate--tRNA ligase, cytoplasmic, found in Encephalitozoon cuniculi (strain GB-M1) (Microsporidian parasite).